We begin with the raw amino-acid sequence, 631 residues long: DNA mismatch repair protein MutL (631 aa).

The protein belongs to the DNA mismatch repair MutL/HexB family.

Its function is as follows. This protein is involved in the repair of mismatches in DNA. It is required for dam-dependent methyl-directed DNA mismatch repair. May act as a 'molecular matchmaker', a protein that promotes the formation of a stable complex between two or more DNA-binding proteins in an ATP-dependent manner without itself being part of a final effector complex. The chain is DNA mismatch repair protein MutL from Lactobacillus acidophilus (strain ATCC 700396 / NCK56 / N2 / NCFM).